The chain runs to 483 residues: Probable cytosol aminopeptidase (483 aa).

The Mn(2+) site is built by lysine 244 and aspartate 249. Residue lysine 256 is part of the active site. Mn(2+) contacts are provided by aspartate 267, aspartate 326, and glutamate 328. Arginine 330 is a catalytic residue.

This sequence belongs to the peptidase M17 family. The cofactor is Mn(2+).

Its subcellular location is the cytoplasm. The enzyme catalyses Release of an N-terminal amino acid, Xaa-|-Yaa-, in which Xaa is preferably Leu, but may be other amino acids including Pro although not Arg or Lys, and Yaa may be Pro. Amino acid amides and methyl esters are also readily hydrolyzed, but rates on arylamides are exceedingly low.. It carries out the reaction Release of an N-terminal amino acid, preferentially leucine, but not glutamic or aspartic acids.. In terms of biological role, presumably involved in the processing and regular turnover of intracellular proteins. Catalyzes the removal of unsubstituted N-terminal amino acids from various peptides. In Campylobacter jejuni subsp. jejuni serotype O:2 (strain ATCC 700819 / NCTC 11168), this protein is Probable cytosol aminopeptidase.